Consider the following 107-residue polypeptide: Ornithine carbamoyltransferase, catabolic (107 aa).

Residues 57–61 (STRTR) and Gln-84 each bind carbamoyl phosphate.

The protein belongs to the aspartate/ornithine carbamoyltransferase superfamily. OTCase family.

It is found in the cytoplasm. It carries out the reaction carbamoyl phosphate + L-ornithine = L-citrulline + phosphate + H(+). The protein operates within amino-acid degradation; L-arginine degradation via ADI pathway; carbamoyl phosphate from L-arginine: step 2/2. The polypeptide is Ornithine carbamoyltransferase, catabolic (arcB) (Streptococcus pyogenes).